Here is a 286-residue protein sequence, read N- to C-terminus: Flagellin FlaB2 (286 aa).

It belongs to the bacterial flagellin family. In terms of assembly, the flagellum consists of an outer layer composed of repeating units of FlaA around a core that contains several antigenically related polypeptides. Interacts with FliW; a synthetic peptide of FlaB1 (residues 229-247) partially blocks binding of this protein to FliW.

It localises to the periplasmic flagellum. The protein resides in the periplasm. Its function is as follows. Component of the core of the flagella. The sequence is that of Flagellin FlaB2 from Treponema pallidum (strain Nichols).